We begin with the raw amino-acid sequence, 599 residues long: NADH-quinone oxidoreductase subunit C/D (599 aa).

The NADH dehydrogenase I subunit C stretch occupies residues 1 to 189; that stretch reads MTDLTTHDLA…DPFELTKQKE (189 aa). The tract at residues 213-599 is NADH dehydrogenase I subunit D; that stretch reads DFMFLNLGPN…IDFVMSDVDR (387 aa).

In the N-terminal section; belongs to the complex I 30 kDa subunit family. This sequence in the C-terminal section; belongs to the complex I 49 kDa subunit family. As to quaternary structure, NDH-1 is composed of 13 different subunits. Subunits NuoB, CD, E, F, and G constitute the peripheral sector of the complex.

The protein resides in the cell inner membrane. It carries out the reaction a quinone + NADH + 5 H(+)(in) = a quinol + NAD(+) + 4 H(+)(out). NDH-1 shuttles electrons from NADH, via FMN and iron-sulfur (Fe-S) centers, to quinones in the respiratory chain. The immediate electron acceptor for the enzyme in this species is believed to be ubiquinone. Couples the redox reaction to proton translocation (for every two electrons transferred, four hydrogen ions are translocated across the cytoplasmic membrane), and thus conserves the redox energy in a proton gradient. The protein is NADH-quinone oxidoreductase subunit C/D of Pectobacterium atrosepticum (strain SCRI 1043 / ATCC BAA-672) (Erwinia carotovora subsp. atroseptica).